Here is a 333-residue protein sequence, read N- to C-terminus: Arginase (333 aa).

Residue M1 is modified to N-acetylmethionine. At S16 the chain carries Phosphoserine. Phosphothreonine is present on T77. Mn(2+)-binding residues include H123, D146, H148, and D150. Residues 148–152 (HADIN), 159–161 (SGN), and D205 contribute to the substrate site. D256 and D258 together coordinate Mn(2+). The residue at position 270 (T270) is a Phosphothreonine. Positions 270 and 301 each coordinate substrate.

It belongs to the arginase family. In terms of assembly, homotrimer. Mn(2+) serves as cofactor.

The enzyme catalyses L-arginine + H2O = urea + L-ornithine. The protein operates within nitrogen metabolism; urea cycle; L-ornithine and urea from L-arginine: step 1/1. The polypeptide is Arginase (CAR1) (Saccharomyces cerevisiae (strain ATCC 204508 / S288c) (Baker's yeast)).